A 174-amino-acid chain; its full sequence is Ferritin, heavy subunit (174 aa).

In terms of domain architecture, Ferritin-like diiron spans 7–156 (QNFHKDCEAA…DWVTNLRRLG (150 aa)). Residues glutamate 24, glutamate 59, histidine 62, glutamate 104, and glutamine 138 each coordinate Fe cation.

It belongs to the ferritin family. As to quaternary structure, in liver, forms a heteromer consisting of middle and heavy subunits. The functional molecule forms a roughly spherical shell with a diameter of 12 nm and contains a central cavity into which the insoluble mineral iron core is deposited. As to expression, liver (at protein level).

The enzyme catalyses 4 Fe(2+) + O2 + 4 H(+) = 4 Fe(3+) + 2 H2O. Functionally, stores iron in a soluble, non-toxic, readily available form. Important for iron homeostasis. Has ferroxidase activity. Iron is taken up in the ferrous form and deposited as ferric hydroxides after oxidation. Also plays a role in delivery of iron to cells. Mediates iron uptake in capsule cells of the developing kidney. Delivery to lysosomes is mediated by the cargo receptor NCOA4 for autophagic degradation and release of iron. This is Ferritin, heavy subunit from Trematomus newnesi (Dusky notothen).